Reading from the N-terminus, the 123-residue chain is Large ribosomal subunit protein bL12 (123 aa).

It belongs to the bacterial ribosomal protein bL12 family. In terms of assembly, homodimer. Part of the ribosomal stalk of the 50S ribosomal subunit. Forms a multimeric L10(L12)X complex, where L10 forms an elongated spine to which 2 to 4 L12 dimers bind in a sequential fashion. Binds GTP-bound translation factors.

In terms of biological role, forms part of the ribosomal stalk which helps the ribosome interact with GTP-bound translation factors. Is thus essential for accurate translation. The protein is Large ribosomal subunit protein bL12 of Haemophilus influenzae (strain 86-028NP).